The chain runs to 353 residues: Holliday junction branch migration complex subunit RuvB (353 aa).

Positions 4–190 (TDKLQAPRVI…FGIVARLEFY (187 aa)) are large ATPase domain (RuvB-L). ATP is bound by residues leucine 29, arginine 30, glycine 71, lysine 74, threonine 75, threonine 76, 137–139 (EDF), arginine 180, tyrosine 190, and arginine 227. A Mg(2+)-binding site is contributed by threonine 75. Residues 191 to 261 (TPHELAYIVG…VADAALLMLD (71 aa)) are small ATPAse domain (RuvB-S). Residues 264-353 (HLGLDLMDRK…DESAELFSAP (90 aa)) are head domain (RuvB-H). Positions 319 and 324 each coordinate DNA.

Belongs to the RuvB family. As to quaternary structure, homohexamer. Forms an RuvA(8)-RuvB(12)-Holliday junction (HJ) complex. HJ DNA is sandwiched between 2 RuvA tetramers; dsDNA enters through RuvA and exits via RuvB. An RuvB hexamer assembles on each DNA strand where it exits the tetramer. Each RuvB hexamer is contacted by two RuvA subunits (via domain III) on 2 adjacent RuvB subunits; this complex drives branch migration. In the full resolvosome a probable DNA-RuvA(4)-RuvB(12)-RuvC(2) complex forms which resolves the HJ.

It is found in the cytoplasm. It catalyses the reaction ATP + H2O = ADP + phosphate + H(+). Functionally, the RuvA-RuvB-RuvC complex processes Holliday junction (HJ) DNA during genetic recombination and DNA repair, while the RuvA-RuvB complex plays an important role in the rescue of blocked DNA replication forks via replication fork reversal (RFR). RuvA specifically binds to HJ cruciform DNA, conferring on it an open structure. The RuvB hexamer acts as an ATP-dependent pump, pulling dsDNA into and through the RuvAB complex. RuvB forms 2 homohexamers on either side of HJ DNA bound by 1 or 2 RuvA tetramers; 4 subunits per hexamer contact DNA at a time. Coordinated motions by a converter formed by DNA-disengaged RuvB subunits stimulates ATP hydrolysis and nucleotide exchange. Immobilization of the converter enables RuvB to convert the ATP-contained energy into a lever motion, pulling 2 nucleotides of DNA out of the RuvA tetramer per ATP hydrolyzed, thus driving DNA branch migration. The RuvB motors rotate together with the DNA substrate, which together with the progressing nucleotide cycle form the mechanistic basis for DNA recombination by continuous HJ branch migration. Branch migration allows RuvC to scan DNA until it finds its consensus sequence, where it cleaves and resolves cruciform DNA. This Aromatoleum aromaticum (strain DSM 19018 / LMG 30748 / EbN1) (Azoarcus sp. (strain EbN1)) protein is Holliday junction branch migration complex subunit RuvB.